The sequence spans 621 residues: Replication factor A protein 1 (621 aa).

N-acetylserine is present on serine 2. Serine 178 carries the phosphoserine; by ATM or ATR modification. Positions 197–284 (WTIKARVSYK…PYELNLDRDT (88 aa)) form a DNA-binding region, OB. The segment at 486–508 (CSNENCNKKVLEQPDGTWRCEKC) adopts a C4-type zinc-finger fold.

This sequence belongs to the replication factor A protein 1 family. Component of the heterotrimeric canonical replication protein A complex (RPA). Interacts with POB3. The N-terminus is blocked.

Its subcellular location is the nucleus. Its function is as follows. As part of the replication protein A (RPA/RP-A), a single-stranded DNA-binding heterotrimeric complex, may play an essential role in DNA replication, recombination and repair. Binds and stabilizes single-stranded DNA intermediates, preventing complementary DNA reannealing and recruiting different proteins involved in DNA metabolism. Binds to single-stranded sequences participating in DNA replication in addition to those mediating transcriptional repression (URS1) and activation (CAR1). Stimulates the activity of a cognate strand exchange protein (SEP1). It cooperates with T-AG and DNA topoisomerase I to unwind template DNA containing the simian virus 40 origin of DNA replication. The chain is Replication factor A protein 1 (RFA1) from Saccharomyces cerevisiae (strain ATCC 204508 / S288c) (Baker's yeast).